Reading from the N-terminus, the 135-residue chain is U-scoloptoxin(22)-Er1a (135 aa).

Residues 1-24 form the signal peptide; that stretch reads MAVILKHLAIILLVFVIEIKMGQG. The tract at residues 61 to 135 is disordered; the sequence is PQITFSTDWG…RSPRYLPTII (75 aa). The segment covering 75-127 has biased composition (basic and acidic residues); the sequence is SVNEDREAAERERSPQMKRSEHEEQLMAKDEMKRFQEERNPSSDDKIAIDKRS.

The protein belongs to the scoloptoxin-22 family. In terms of tissue distribution, expressed by the venom gland.

Its subcellular location is the secreted. The chain is U-scoloptoxin(22)-Er1a from Ethmostigmus rubripes (Giant centipede).